A 135-amino-acid polypeptide reads, in one-letter code: Interleukin-5 (135 aa).

The N-terminal stretch at 1 to 19 (MRVLLQLGLLALGAVCVCA) is a signal peptide. 3 N-linked (GlcNAc...) asparagine glycosylation sites follow: Asn-48, Asn-77, and Asn-91.

It belongs to the IL-5 family. As to quaternary structure, homodimer; disulfide-linked. Interacts with IL5RA. Interacts with CSF2RB.

Its subcellular location is the secreted. Its function is as follows. Homodimeric cytokine expressed predominantly by T-lymphocytes and NK cells that plays an important role in the survival, differentiation, and chemotaxis of eosinophils. Also acts on activated and resting B-cells to induce immunoglobulin production, growth, and differentiation. Mechanistically, exerts its biological effects through a receptor composed of IL5RA subunit and the cytokine receptor common subunit beta/CSF2RB. Binding to the receptor leads to activation of various kinases including LYN, SYK and JAK2 and thereby propagates signals through the RAS-MAPK and JAK-STAT5 pathways respectively. This is Interleukin-5 (IL5) from Cavia porcellus (Guinea pig).